The primary structure comprises 2731 residues: Putative mediator of RNA polymerase II transcription subunit 12 (2731 aa).

Coiled coils occupy residues 5 to 37 (QQIL…QQQQ), 75 to 108 (HIQQ…QQVH), 141 to 189 (QQIH…QQQQ), and 275 to 304 (IQQL…QQQQ). 2 disordered regions span residues 29–57 (QQQM…HMIH) and 101–145 (QQQQ…QIHQ). A compositionally biased stretch (low complexity) spans 310–320 (QPQQQQQQQQP). 4 disordered regions span residues 310-376 (QPQQ…DDKS), 432-451 (TQKS…RPVP), 685-708 (LGHG…QQPQ), and 1251-1341 (RNNN…QQKS). Over residues 327 to 337 (QNPSYHSQSQI) the composition is skewed to polar residues. A compositionally biased stretch (basic and acidic residues) spans 347–361 (KKYEIQKPADKKELG). Residues 688–701 (GHGHGHGHHSHSHS) show a composition bias toward basic residues. A compositionally biased stretch (low complexity) spans 1251–1268 (RNNNNNNKNKNNNKQSNN). Composition is skewed to acidic residues over residues 1275 to 1298 (NGEE…DNDE) and 1305 to 1326 (NDNE…DDQM). Coiled-coil stretches lie at residues 1316–1344 (EDED…SNEN) and 1375–1433 (KLKK…DEEL). Disordered regions lie at residues 1778 to 1825 (HDDN…NNNG), 1892 to 1958 (TQSS…NNTT), 2212 to 2258 (SSSS…NNVK), 2307 to 2351 (TSSV…QQQQ), 2472 to 2532 (EIEK…KPQT), and 2705 to 2731 (HQQI…NNYK). Composition is skewed to low complexity over residues 1783–1824 (ENNN…NNNN), 1892–1909 (TQSS…QSPT), 1916–1958 (NSTN…NNTT), 2212–2250 (SSSS…QQQQ), 2307–2322 (TSSV…STTS), 2337–2351 (QQQT…QQQQ), 2472–2501 (EIEK…HQQL), 2508–2532 (LQQQ…KPQT), and 2705–2720 (HQQI…HQQQ). Positions 2239–2270 (TNQQQQQQQQQQADQKNNVKKKLHELYQKIKS) form a coiled coil. A coiled-coil region spans residues 2336-2363 (LQQQTSQQQQQQQQQQQQQSQQHQQQQQ). Residues 2523-2662 (QQLQQQKPQT…QQQQQQLQQL (140 aa)) adopt a coiled-coil conformation. The segment covering 2721-2731 (KCSTTKYNNYK) has biased composition (polar residues).

Belongs to the Mediator complex subunit 12 family. Component of the Mediator complex.

It is found in the nucleus. Component of the Mediator complex, a coactivator involved in the regulated transcription of nearly all RNA polymerase II-dependent genes. Mediator functions as a bridge to convey information from gene-specific regulatory proteins to the basal RNA polymerase II transcription machinery. Mediator is recruited to promoters by direct interactions with regulatory proteins and serves as a scaffold for the assembly of a functional preinitiation complex with RNA polymerase II and the general transcription factors. The sequence is that of Putative mediator of RNA polymerase II transcription subunit 12 (med12) from Dictyostelium discoideum (Social amoeba).